Consider the following 528-residue polypeptide: Low affinity inorganic phosphate transporter 4 (528 aa).

Residues 1-18 are Cytoplasmic-facing; that stretch reads MGLEVLEALDSARTQWYH. A helical transmembrane segment spans residues 19–39; that stretch reads VTAIVIAGMGFFTDAYDLFCI. The Extracellular portion of the chain corresponds to 40–68; the sequence is STVSKLLGRLYYFDPSTNKPGKLPPSVNN. A helical membrane pass occupies residues 69–89; sequence VVTGVALVGTLSGQLVFGWLG. Topologically, residues 90-96 are cytoplasmic; that stretch reads DKLGRKK. Residues 97–117 form a helical membrane-spanning segment; sequence VYGVTLIIMVACAICSGLSFG. The Extracellular portion of the chain corresponds to 118 to 122; it reads SSAKS. The chain crosses the membrane as a helical span at residues 123-143; sequence VMITLCFFRFWLGFGIGGDYP. Over 144–158 the chain is Cytoplasmic; sequence LSATIMSEYANKRTR. The helical transmembrane segment at 159–179 threads the bilayer; sequence GAFIAAVFAMQGVGIIFAGLV. Residues 180-208 lie on the Extracellular side of the membrane; it reads SMVFSGIFKAYYQAPRFNEDPILSTQPEG. The chain crosses the membrane as a helical span at residues 209–229; it reads DLLWRLILMIGAVPAAMTYYW. The Cytoplasmic segment spans residues 230–292; that stretch reads RMKMPETGRY…SEFFNRHGRH (63 aa). A helical membrane pass occupies residues 293 to 313; sequence LIGTMSCWFLLDIAFYSQNLT. At 314 to 341 the chain is on the extracellular side; that stretch reads QKDIYPAMGLIRQDKEMNAIDEVFQTSR. A helical membrane pass occupies residues 342–362; that stretch reads AMFVVALFGTFPGYWFTVFFI. Over 363–371 the chain is Cytoplasmic; that stretch reads EKLGRFKIQ. Residues 372 to 392 form a helical membrane-spanning segment; that stretch reads LVGFFMMSFFMFVIGVKYEYL. At 393 to 401 the chain is on the extracellular side; the sequence is KDENKNLFA. The chain crosses the membrane as a helical span at residues 402 to 422; that stretch reads LLYGLTFFFANFGPNSTTFVL. Over 423 to 433 the chain is Cytoplasmic; sequence PAELFPTRVRS. The helical transmembrane segment at 434–454 threads the bilayer; that stretch reads TCHAFSAASGKAGAMVGAFGI. At 455 to 468 the chain is on the extracellular side; sequence QYYTLDGTPRKIRR. The helical transmembrane segment at 469-489 threads the bilayer; it reads AMMILAFTNLIGFFCTFLVTE. The Cytoplasmic portion of the chain corresponds to 490-528; it reads TKGRSLEEISGEDGRESELTATPNDRAPGIRQDSRTEKM. Residues 497-507 are compositionally biased toward basic and acidic residues; that stretch reads EISGEDGRESE. Residues 497–528 form a disordered region; the sequence is EISGEDGRESELTATPNDRAPGIRQDSRTEKM.

The protein belongs to the major facilitator superfamily. Phosphate:H(+) symporter (TC 2.A.1.9) family. As to expression, mostly expressed in mycorrhizal roots. Also observed in root tips of non-mycorrhizal roots, in a phosphate (Pi) depended-manner, highest expression levels being observed in low Pi conditions.

The protein resides in the cell membrane. It catalyses the reaction phosphate(in) + H(+)(in) = phosphate(out) + H(+)(out). Functionally, low-affinity transporter for external inorganic phosphate (Pi) probably involved in the acquisition of phosphate released by arbuscular mycorrhizal (AM) fungi (e.g. Gigaspora gigantea, Glomus versiforme and G.intraradices) during AM symbiosis; required for propper mycorrhizal arbuscule morphology. Acts as a Pi-sensing machinery at the root tip level, independently of AM fungi, involved in the regulation of early root branching and lateral roots formation. The sequence is that of Low affinity inorganic phosphate transporter 4 from Medicago truncatula (Barrel medic).